The primary structure comprises 156 residues: Ribosomal RNA large subunit methyltransferase H (156 aa).

Residues Leu73, Gly104, and Leu123 to Leu128 contribute to the S-adenosyl-L-methionine site.

It belongs to the RNA methyltransferase RlmH family. In terms of assembly, homodimer.

Its subcellular location is the cytoplasm. The enzyme catalyses pseudouridine(1915) in 23S rRNA + S-adenosyl-L-methionine = N(3)-methylpseudouridine(1915) in 23S rRNA + S-adenosyl-L-homocysteine + H(+). In terms of biological role, specifically methylates the pseudouridine at position 1915 (m3Psi1915) in 23S rRNA. The protein is Ribosomal RNA large subunit methyltransferase H of Laribacter hongkongensis (strain HLHK9).